Consider the following 271-residue polypeptide: MAAEPPADGRDPPADDGAAGDGAVESAAAEALLSAASEQLTLVYQGEVYVFDPVPPQKVQAVLLVLGGSDMPPGLVSMAVPTTFDEKSTTVAARRIASLMRFREKRKERCFDKKIRYSVRKEVAQKMKRRKGQFAGRADFGDGSCSSAPCGSTANGEDDHIRETHCQNCGISSRLTPAMRRGPAGPRSLCNACGLMWANKGTLRSPLNAPKMTVQHPADLSKTGDTDDSKANLCAEHNQTTMKTDTEMVPEQEQKADVLPPTKEEDSMATS.

The disordered stretch occupies residues 1 to 23 (MAAEPPADGRDPPADDGAAGDGA). One can recognise a Tify domain in the interval 33 to 68 (LSAASEQLTLVYQGEVYVFDPVPPQKVQAVLLVLGG). In terms of domain architecture, CCT spans 95–137 (RIASLMRFREKRKERCFDKKIRYSVRKEVAQKMKRRKGQFAGR). A GATA-type zinc finger spans residues 166–193 (CQNCGISSRLTPAMRRGPAGPRSLCNAC). Positions 238-271 (NQTTMKTDTEMVPEQEQKADVLPPTKEEDSMATS) are disordered. The span at 252–271 (QEQKADVLPPTKEEDSMATS) shows a compositional bias: basic and acidic residues.

The protein belongs to the type IV zinc-finger family. Class C subfamily.

Its subcellular location is the nucleus. Functionally, transcriptional activator that specifically binds 5'-GATA-3' or 5'-GAT-3' motifs within gene promoters. In Oryza sativa subsp. indica (Rice), this protein is GATA transcription factor 19.